Here is a 1000-residue protein sequence, read N- to C-terminus: MDEQISKAVEIALSGTSDLVLKNQAFEFINQIKSTEEGYKSCLDILLKSINSNSPLNQEFKFFILQVIDENITKLNNEQLYELNSDLFQYLNYVINSNINDPVYLKNKFAGIMGNLFCFTYLSINPTFLKDLLALIADNNLIAIDIYSRIIIAVHTEISDKFISRSREVQDRNNLLKDQIRTNDMNLLVDNWQKILRNPELIQHNNEVLNNFLKIIGYYINWMEITLFISNDFINIIFQYLNKPDQRNETCLTLIEVISKKMKPLNKLELISLLNLTSIINSINNDDDLEFMENIAKLSNQVGLELVIVLESSELELFDSINQQFLNLWPSIFKFLSHEYDDISQQIFPFIQQYLLTCKKFNQLASIELLSSLLNKIILKMKFDDDDDGTDDESTEQFNEVRLKLKTFQDTIAILKPELFLEAIPIVINESIFANVSDFDKVNWRNLELGLFELNTFTESLRNNLINLPKQEIGNSKPYVLVQEFLIKLINSDVVLKVDHPKIQLGFFELIVRHYNFLNTNINNQEVILRILELFSSPLGLFNNSEKVRLRTWYLFFRFVKLTKPTLNNSSFIENLFIKLQPLLVIKAELPTKDEDNDTVENGNFNNQLNLFESIGLLISLLSVDISLKVRMIDLIFQPLFNDLENCISNKDKVNQQLIALQAHHSLMAIGTFARGYDYDYNNKYSAEIVGKINNASQVVLITLENFAKFEIIRDAARFSFARFIPILNEEINNHLSKLVSIILAANNLKISELTNFLNFLGQIVHNFQSNDNIYKLLNDLLSPLLDKIFSLLKYNGENNEYESMPDIIRDKESLKKSYMNFISAIITNHSSSLLITETNKQKFPIILESFFVYAYNTSEPTVSKLAITQLINVVSVMGGHGGKINDPQDKYGESLPPLEGVDEYLMNKAVQLSFELPFQKSEFDLKDAQYRLVGQEIASLLKTYQEKRGDEYLTFLSNYLTNMGLSSELMTDFCTNLVKVDQRAFKKYFITFVTELKGK.

This sequence belongs to the exportin family.

Its subcellular location is the nucleus. It localises to the cytoplasm. TRNA nucleus export receptor which facilitates tRNA translocation across the nuclear pore complex. Involved in pre-tRNA splicing, probably by affecting the interaction of pre-tRNA with splicing endonuclease. The polypeptide is Exportin-T (LOS1) (Debaryomyces hansenii (strain ATCC 36239 / CBS 767 / BCRC 21394 / JCM 1990 / NBRC 0083 / IGC 2968) (Yeast)).